The sequence spans 411 residues: Na(+)-translocating NADH-quinone reductase subunit B (411 aa).

A run of 3 helical transmembrane segments spans residues M56–G76, A120–W140, and I166–V186. FMN phosphoryl threonine is present on T233. The next 5 membrane-spanning stretches (helical) occupy residues V272–W292, I294–S314, M319–F339, S348–I368, and G378–V398.

Belongs to the NqrB/RnfD family. Composed of six subunits; NqrA, NqrB, NqrC, NqrD, NqrE and NqrF. FMN serves as cofactor.

Its subcellular location is the cell inner membrane. It carries out the reaction a ubiquinone + n Na(+)(in) + NADH + H(+) = a ubiquinol + n Na(+)(out) + NAD(+). NQR complex catalyzes the reduction of ubiquinone-1 to ubiquinol by two successive reactions, coupled with the transport of Na(+) ions from the cytoplasm to the periplasm. NqrA to NqrE are probably involved in the second step, the conversion of ubisemiquinone to ubiquinol. This is Na(+)-translocating NADH-quinone reductase subunit B from Haemophilus influenzae (strain 86-028NP).